The primary structure comprises 295 residues: Small ribosomal subunit protein uS2 (295 aa).

The disordered stretch occupies residues 273–295 (WAASSAPAAETLADPAADPSVKW). Positions 274 to 295 (AASSAPAAETLADPAADPSVKW) are enriched in low complexity.

It belongs to the universal ribosomal protein uS2 family. Component of the small ribosomal subunit. Mature ribosomes consist of a small (40S) and a large (60S) subunit. The 40S subunit contains about 33 different proteins and 1 molecule of RNA (18S). The 60S subunit contains about 49 different proteins and 3 molecules of RNA (25S, 5.8S and 5S). Interacts with RPS21.

The protein resides in the cytoplasm. In terms of biological role, required for the assembly and/or stability of the 40S ribosomal subunit. Required for the processing of the 20S rRNA-precursor to mature 18S rRNA in a late step of the maturation of 40S ribosomal subunits. The sequence is that of Small ribosomal subunit protein uS2 from Paracoccidioides lutzii (strain ATCC MYA-826 / Pb01) (Paracoccidioides brasiliensis).